Here is a 552-residue protein sequence, read N- to C-terminus: CTP synthase (552 aa).

The interval 1–270 (MTKFVFVTGG…DGLICDKLRL (270 aa)) is amidoligase domain. Residue S13 coordinates CTP. S13 serves as a coordination point for UTP. ATP is bound by residues 14-19 (SLGKGI) and D71. 2 residues coordinate Mg(2+): D71 and E144. CTP-binding positions include 151–153 (DIE), 191–196 (KTKPTQ), and K227. Residues 191–196 (KTKPTQ) and K227 each bind UTP. Positions 295–548 (QIAMVGKYVE…IKAAVEHQKP (254 aa)) constitute a Glutamine amidotransferase type-1 domain. An L-glutamine-binding site is contributed by G357. C384 (nucleophile; for glutamine hydrolysis) is an active-site residue. Residues 385–388 (LGMQ) and E408 each bind L-glutamine. A disordered region spans residues 432-451 (KTRSENSDLGGTMRLGAQSS). Residue R474 participates in L-glutamine binding. Residues H521 and E523 contribute to the active site.

It belongs to the CTP synthase family. Homotetramer.

It catalyses the reaction UTP + L-glutamine + ATP + H2O = CTP + L-glutamate + ADP + phosphate + 2 H(+). The enzyme catalyses L-glutamine + H2O = L-glutamate + NH4(+). It carries out the reaction UTP + NH4(+) + ATP = CTP + ADP + phosphate + 2 H(+). It participates in pyrimidine metabolism; CTP biosynthesis via de novo pathway; CTP from UDP: step 2/2. Its activity is regulated as follows. Allosterically activated by GTP, when glutamine is the substrate; GTP has no effect on the reaction when ammonia is the substrate. The allosteric effector GTP functions by stabilizing the protein conformation that binds the tetrahedral intermediate(s) formed during glutamine hydrolysis. Inhibited by the product CTP, via allosteric rather than competitive inhibition. In terms of biological role, catalyzes the ATP-dependent amination of UTP to CTP with either L-glutamine or ammonia as the source of nitrogen. Regulates intracellular CTP levels through interactions with the four ribonucleotide triphosphates. This is CTP synthase from Acidovorax sp. (strain JS42).